The chain runs to 348 residues: Thioesterase-like protein TwmA (348 aa).

Its pathway is secondary metabolite biosynthesis. Its function is as follows. Thioesterase-like protein; part of the gene cluster that mediates the biosynthesis of wortmanamides A and B, reduced long-chain polyketides amidated with a specific omega-amino acid, 5-aminopentanoic acid (5PA). The PKS modules of TwmB are involved in the synthesis of the polyketide backbone, whereas the non-canonical C domain of TwmB is a bonafide condensation domain that specifically selects 5PA and catalyzes amidation to release polyketide chain. The C domain clearly prefers C16 and C18 fatty acyl substrates, which is consistent with simultaneous formation of both octaketide and nonaketide acyl amides wortmanamides A and B. Because TwmB lacks a designated enoylreductase (ER) domain, the required activity is provided the enoyl reductase TwmE. The roles of the remaining enzymes have still to be clarified. The protein is Thioesterase-like protein TwmA of Talaromyces wortmannii (Penicillium wortmannii).